We begin with the raw amino-acid sequence, 252 residues long: tRNA (guanine-N(1)-)-methyltransferase (252 aa).

Residues G113 and 133 to 138 (VGDFVL) contribute to the S-adenosyl-L-methionine site.

It belongs to the RNA methyltransferase TrmD family. As to quaternary structure, homodimer.

The protein localises to the cytoplasm. The enzyme catalyses guanosine(37) in tRNA + S-adenosyl-L-methionine = N(1)-methylguanosine(37) in tRNA + S-adenosyl-L-homocysteine + H(+). Its function is as follows. Specifically methylates guanosine-37 in various tRNAs. The protein is tRNA (guanine-N(1)-)-methyltransferase of Francisella tularensis subsp. holarctica (strain FTNF002-00 / FTA).